Reading from the N-terminus, the 356-residue chain is 4-hydroxybenzoate polyprenyltransferase, mitochondrial (356 aa).

The transit peptide at 1 to 44 directs the protein to the mitochondrion; sequence MITRSIGIARRSNSINCIVGSNTSTSYSLDESTKRWISTSTKQP. Helical transmembrane passes span 71–91, 93–113, 150–170, 195–215, 269–289, and 332–352; these read VDKP…IAMA, PAGQ…AFLM, AIGL…QLNW, WPQF…WCAL, WLSA…IASD, and IILF…QILI.

This sequence belongs to the UbiA prenyltransferase family. The cofactor is Mg(2+).

It is found in the mitochondrion inner membrane. It carries out the reaction an all-trans-polyprenyl diphosphate + 4-hydroxybenzoate = a 4-hydroxy-3-(all-trans-polyprenyl)benzoate + diphosphate. It participates in cofactor biosynthesis; ubiquinone biosynthesis. Catalyzes the prenylation of para-hydroxybenzoate (PHB) with an all-trans polyprenyl group. Mediates the second step in the final reaction sequence of coenzyme Q (CoQ) biosynthesis, which is the condensation of the polyisoprenoid side chain with PHB, generating the first membrane-bound Q intermediate. The protein is 4-hydroxybenzoate polyprenyltransferase, mitochondrial (coq-2) of Caenorhabditis elegans.